We begin with the raw amino-acid sequence, 279 residues long: Elongation factor Ts (279 aa).

Positions 80–83 (TDFV) are involved in Mg(2+) ion dislocation from EF-Tu.

It belongs to the EF-Ts family.

It is found in the cytoplasm. Associates with the EF-Tu.GDP complex and induces the exchange of GDP to GTP. It remains bound to the aminoacyl-tRNA.EF-Tu.GTP complex up to the GTP hydrolysis stage on the ribosome. This chain is Elongation factor Ts, found in Borrelia garinii subsp. bavariensis (strain ATCC BAA-2496 / DSM 23469 / PBi) (Borreliella bavariensis).